A 200-amino-acid chain; its full sequence is Serine/threonine-protein kinase mos (200 aa).

The 199-residue stretch at 2-200 (LCLLQPLGSG…ELLKGERVTA (199 aa)) folds into the Protein kinase domain. ATP-binding positions include 8-16 (LGSGGFGSV) and lysine 29. Residue aspartate 143 is the Proton acceptor of the active site.

This sequence belongs to the protein kinase superfamily. Ser/Thr protein kinase family.

It catalyses the reaction L-seryl-[protein] + ATP = O-phospho-L-seryl-[protein] + ADP + H(+). The enzyme catalyses L-threonyl-[protein] + ATP = O-phospho-L-threonyl-[protein] + ADP + H(+). The polypeptide is Serine/threonine-protein kinase mos (MOS) (Nycticorax nycticorax (Black-crowned night-heron)).